Consider the following 550-residue polypeptide: Protein UshA (550 aa).

A signal peptide spans 1–25; that stretch reads MRFSLSTTAAALAVSLAFAPGWAVA. Positions 41, 43, 84, 116, 217, 252, and 254 each coordinate a divalent metal cation. C258 and C275 are oxidised to a cystine. Residues 375–379 and 498–504 each bind substrate; these read RSKVR and FNALGGD.

It belongs to the 5'-nucleotidase family. It depends on Co(2+) as a cofactor.

The protein resides in the periplasm. The enzyme catalyses UDP-sugar + H2O = UMP + alpha-D-aldose 1-phosphate.. The catalysed reaction is a ribonucleoside 5'-phosphate + H2O = a ribonucleoside + phosphate. Its function is as follows. Degradation of external UDP-glucose to uridine monophosphate and glucose-1-phosphate, which can then be used by the cell. This chain is Protein UshA (ushA), found in Yersinia enterocolitica serotype O:8 / biotype 1B (strain NCTC 13174 / 8081).